The sequence spans 191 residues: Glycerol-3-phosphate acyltransferase (191 aa).

5 helical membrane passes run 5–25 (IVFV…ITKI), 50–70 (CIAA…VYIA), 78–98 (SFHM…PVWL), 112–132 (ILIA…LAVF), and 153–173 (SFFF…LIFF).

The protein belongs to the PlsY family. As to quaternary structure, probably interacts with PlsX.

It localises to the cell membrane. The catalysed reaction is an acyl phosphate + sn-glycerol 3-phosphate = a 1-acyl-sn-glycero-3-phosphate + phosphate. The protein operates within lipid metabolism; phospholipid metabolism. Functionally, catalyzes the transfer of an acyl group from acyl-phosphate (acyl-PO(4)) to glycerol-3-phosphate (G3P) to form lysophosphatidic acid (LPA). This enzyme utilizes acyl-phosphate as fatty acyl donor, but not acyl-CoA or acyl-ACP. This Wolbachia sp. subsp. Brugia malayi (strain TRS) protein is Glycerol-3-phosphate acyltransferase.